The following is a 183-amino-acid chain: Protein vem-1 (183 aa).

Residues 9-29 (FTMYDAVFLVVVLGFFFYWLT) form a helical membrane-spanning segment. The Cytochrome b5 heme-binding domain occupies 47–146 (MSDMTVEELR…FKYLTVGRLV (100 aa)).

It belongs to the cytochrome b5 family. MAPR subfamily. Interacts with unc-40 (via cytoplasmic domain). As to expression, expressed in the AVG pioneer midline neuron and in several nerve ring neurons that extend projecting axons into the right ventral nerve cord.

The protein resides in the membrane. It localises to the cell projection. The protein localises to the axon. Functionally, transmembrane protein required for the axon guidance of a subset of ventral nerve cord-associated interneurons and motor neurons. May function with the netrin receptor unc-40 in axon guidance. The polypeptide is Protein vem-1 (Caenorhabditis elegans).